Consider the following 348-residue polypeptide: Galanin receptor type 1 (348 aa).

The Extracellular segment spans residues 1–34 (MELAMVNLSEGNGSDPEPPAPESRPLFGIGVENF). N-linked (GlcNAc...) asparagine glycosylation is found at N7 and N12. Residues 35-55 (ITLVVFGLIFAMGVLGNSLVI) form a helical membrane-spanning segment. Topologically, residues 56-70 (TVLARSKPGKPRSTT) are cytoplasmic. The helical transmembrane segment at 71–91 (NLFILNLSIADLAYLLFCIPF) threads the bilayer. Over 92 to 109 (QATVYALPTWVLGAFICK) the chain is Extracellular. C108 and C186 are joined by a disulfide. Residues 110 to 131 (FIHYFFTVSMLVSIFTLAAMSV) traverse the membrane as a helical segment. Topologically, residues 132–151 (DRYVAIVHSRRSSSLRVSRN) are cytoplasmic. The helical transmembrane segment at 152-172 (ALLGVGFIWALSIAMASPVAY) threads the bilayer. Residues 173–197 (HQRLFHRDSNQTFCWEQWPNKLHKK) lie on the Extracellular side of the membrane. N-linked (GlcNAc...) asparagine glycosylation occurs at N182. Residues 198 to 218 (AYVVCTFVFGYLLPLLLICFC) traverse the membrane as a helical segment. Topologically, residues 219 to 247 (YAKVLNHLHKKLKNMSKKSEASKKKTAQT) are cytoplasmic. A helical transmembrane segment spans residues 248–268 (VLVVVVVFGISWLPHHVVHLW). Residues 269–270 (AE) lie on the Extracellular side of the membrane. The chain crosses the membrane as a helical span at residues 271–291 (FGAFPLTPASFFFRITAHCLA). Residues 292 to 348 (YSNSSVNPIIYAFLSENFRKAYKQVFKCHVCDESPRSETKENKSRMDTPPSTNCTHV) are Cytoplasmic-facing. The S-palmitoyl cysteine moiety is linked to residue C319. Residues 328–337 (SETKENKSRM) show a composition bias toward basic and acidic residues. Residues 328–348 (SETKENKSRMDTPPSTNCTHV) form a disordered region.

The protein belongs to the G-protein coupled receptor 1 family. Interacts with GRP39 AND HTR1A. Three cysteine residues are found in the C-terminus, at least one of which may be palmitoylated. Expression is detected in brain, spinal cord, heart and skeletal muscle.

The protein resides in the cell membrane. In terms of biological role, receptor for the hormone galanin. The activity of this receptor is mediated by G proteins that inhibit adenylate cyclase activity. The polypeptide is Galanin receptor type 1 (Galr1) (Mus musculus (Mouse)).